The following is a 468-amino-acid chain: Uronate isomerase (468 aa).

Belongs to the metallo-dependent hydrolases superfamily. Uronate isomerase family.

The catalysed reaction is D-glucuronate = D-fructuronate. The enzyme catalyses aldehydo-D-galacturonate = keto-D-tagaturonate. It participates in carbohydrate metabolism; pentose and glucuronate interconversion. The chain is Uronate isomerase from Brachyspira hyodysenteriae (strain ATCC 49526 / WA1).